A 328-amino-acid polypeptide reads, in one-letter code: Tetraacyldisaccharide 4'-kinase (328 aa).

55-62 (TAGGNGKT) contributes to the ATP binding site.

This sequence belongs to the LpxK family.

The enzyme catalyses a lipid A disaccharide + ATP = a lipid IVA + ADP + H(+). It participates in glycolipid biosynthesis; lipid IV(A) biosynthesis; lipid IV(A) from (3R)-3-hydroxytetradecanoyl-[acyl-carrier-protein] and UDP-N-acetyl-alpha-D-glucosamine: step 6/6. Functionally, transfers the gamma-phosphate of ATP to the 4'-position of a tetraacyldisaccharide 1-phosphate intermediate (termed DS-1-P) to form tetraacyldisaccharide 1,4'-bis-phosphate (lipid IVA). The polypeptide is Tetraacyldisaccharide 4'-kinase (Escherichia coli O157:H7).